Here is a 239-residue protein sequence, read N- to C-terminus: tRNA (guanine-N(1)-)-methyltransferase (239 aa).

S-adenosyl-L-methionine-binding positions include Gly113 and 133–138; that span reads IGDYVL. The interval 218–239 is disordered; it reads ERRPDLWAARATQNPPERKTNG.

The protein belongs to the RNA methyltransferase TrmD family. In terms of assembly, homodimer.

It is found in the cytoplasm. The enzyme catalyses guanosine(37) in tRNA + S-adenosyl-L-methionine = N(1)-methylguanosine(37) in tRNA + S-adenosyl-L-homocysteine + H(+). Specifically methylates guanosine-37 in various tRNAs. The chain is tRNA (guanine-N(1)-)-methyltransferase from Nitrobacter winogradskyi (strain ATCC 25391 / DSM 10237 / CIP 104748 / NCIMB 11846 / Nb-255).